The sequence spans 70 residues: Small ribosomal subunit protein bS21 (70 aa).

It belongs to the bacterial ribosomal protein bS21 family.

The polypeptide is Small ribosomal subunit protein bS21 (Sulfurovum sp. (strain NBC37-1)).